A 135-amino-acid polypeptide reads, in one-letter code: MATAGHKGAPKTKVRRKEKKNVVAGQAHIKSTFNNTIIAITDPSGAVISWASAGTVGFKGSRKSTPFAAQMAAEAAGRRAMEHGMKRVDVFVKGPGSGRETAIRSLGAVGLEIGPISDVTPVPHNGCRPPKRRRV.

Belongs to the universal ribosomal protein uS11 family. Part of the 30S ribosomal subunit. Interacts with proteins S7 and S18. Binds to IF-3.

In terms of biological role, located on the platform of the 30S subunit, it bridges several disparate RNA helices of the 16S rRNA. Forms part of the Shine-Dalgarno cleft in the 70S ribosome. This is Small ribosomal subunit protein uS11 from Cutibacterium acnes (strain DSM 16379 / KPA171202) (Propionibacterium acnes).